A 191-amino-acid chain; its full sequence is dTTP/UTP pyrophosphatase (191 aa).

The Proton acceptor role is filled by aspartate 71.

This sequence belongs to the Maf family. YhdE subfamily. A divalent metal cation is required as a cofactor.

Its subcellular location is the cytoplasm. The catalysed reaction is dTTP + H2O = dTMP + diphosphate + H(+). It catalyses the reaction UTP + H2O = UMP + diphosphate + H(+). In terms of biological role, nucleoside triphosphate pyrophosphatase that hydrolyzes dTTP and UTP. May have a dual role in cell division arrest and in preventing the incorporation of modified nucleotides into cellular nucleic acids. This is dTTP/UTP pyrophosphatase from Hyphomonas neptunium (strain ATCC 15444).